The chain runs to 714 residues: Fatty acid oxidation complex subunit alpha (714 aa).

Residues 1–190 (MDTVSAFKLE…KAGLVDEVVP (190 aa)) are enoyl-CoA hydratase. The tract at residues 306–714 (GSLRSVAVLG…TFWPADERLT (409 aa)) is 3-hydroxyacyl-CoA dehydrogenase.

This sequence in the N-terminal section; belongs to the enoyl-CoA hydratase/isomerase family. The protein in the central section; belongs to the 3-hydroxyacyl-CoA dehydrogenase family. Heterotetramer of two alpha chains (FadJ) and two beta chains (FadI).

The protein resides in the cytoplasm. The enzyme catalyses a (3S)-3-hydroxyacyl-CoA = a (2E)-enoyl-CoA + H2O. The catalysed reaction is a 4-saturated-(3S)-3-hydroxyacyl-CoA = a (3E)-enoyl-CoA + H2O. It catalyses the reaction a (3S)-3-hydroxyacyl-CoA + NAD(+) = a 3-oxoacyl-CoA + NADH + H(+). It carries out the reaction (3S)-3-hydroxybutanoyl-CoA = (3R)-3-hydroxybutanoyl-CoA. It functions in the pathway lipid metabolism; fatty acid beta-oxidation. Catalyzes the formation of a hydroxyacyl-CoA by addition of water on enoyl-CoA. Also exhibits 3-hydroxyacyl-CoA epimerase and 3-hydroxyacyl-CoA dehydrogenase activities. The sequence is that of Fatty acid oxidation complex subunit alpha from Klebsiella pneumoniae subsp. pneumoniae (strain ATCC 700721 / MGH 78578).